Consider the following 865-residue polypeptide: Leucine--tRNA ligase (865 aa).

The 'HIGH' region signature appears at proline 41–histidine 51. The short motif at lysine 614–serine 618 is the 'KMSKS' region element. Residue lysine 617 participates in ATP binding.

It belongs to the class-I aminoacyl-tRNA synthetase family.

The protein localises to the cytoplasm. The catalysed reaction is tRNA(Leu) + L-leucine + ATP = L-leucyl-tRNA(Leu) + AMP + diphosphate. This Rhodospirillum centenum (strain ATCC 51521 / SW) protein is Leucine--tRNA ligase.